The following is a 234-amino-acid chain: tRNA (guanine-N(1)-)-methyltransferase (234 aa).

S-adenosyl-L-methionine is bound by residues Gly110 and 134–139 (IGDYVL).

This sequence belongs to the RNA methyltransferase TrmD family. In terms of assembly, homodimer.

The protein localises to the cytoplasm. It carries out the reaction guanosine(37) in tRNA + S-adenosyl-L-methionine = N(1)-methylguanosine(37) in tRNA + S-adenosyl-L-homocysteine + H(+). Its function is as follows. Specifically methylates guanosine-37 in various tRNAs. In Tropheryma whipplei (strain Twist) (Whipple's bacillus), this protein is tRNA (guanine-N(1)-)-methyltransferase.